The chain runs to 179 residues: Large ribosomal subunit protein uL6 (179 aa).

The protein belongs to the universal ribosomal protein uL6 family. In terms of assembly, part of the 50S ribosomal subunit.

This protein binds to the 23S rRNA, and is important in its secondary structure. It is located near the subunit interface in the base of the L7/L12 stalk, and near the tRNA binding site of the peptidyltransferase center. In Rhodococcus erythropolis (strain PR4 / NBRC 100887), this protein is Large ribosomal subunit protein uL6.